Here is a 200-residue protein sequence, read N- to C-terminus: Holliday junction branch migration complex subunit RuvA (200 aa).

Residues 1-65 form a domain I region; that stretch reads MYEYIKGTLT…ETEHVLYGFS (65 aa). Residues 66-144 are domain II; it reads SRAERECFRL…TLMPLYLEEP (79 aa). Residues 145–149 form a flexible linker region; that stretch reads VVPSS. The segment at 150 to 200 is domain III; that stretch reads TANSSFKEGIGALMNLGFSRLAADRMMTEAVKELSEEASVAELLPIALRKS.

This sequence belongs to the RuvA family. As to quaternary structure, homotetramer. Forms an RuvA(8)-RuvB(12)-Holliday junction (HJ) complex. HJ DNA is sandwiched between 2 RuvA tetramers; dsDNA enters through RuvA and exits via RuvB. An RuvB hexamer assembles on each DNA strand where it exits the tetramer. Each RuvB hexamer is contacted by two RuvA subunits (via domain III) on 2 adjacent RuvB subunits; this complex drives branch migration. In the full resolvosome a probable DNA-RuvA(4)-RuvB(12)-RuvC(2) complex forms which resolves the HJ.

The protein resides in the cytoplasm. Its function is as follows. The RuvA-RuvB-RuvC complex processes Holliday junction (HJ) DNA during genetic recombination and DNA repair, while the RuvA-RuvB complex plays an important role in the rescue of blocked DNA replication forks via replication fork reversal (RFR). RuvA specifically binds to HJ cruciform DNA, conferring on it an open structure. The RuvB hexamer acts as an ATP-dependent pump, pulling dsDNA into and through the RuvAB complex. HJ branch migration allows RuvC to scan DNA until it finds its consensus sequence, where it cleaves and resolves the cruciform DNA. This is Holliday junction branch migration complex subunit RuvA from Chlamydia trachomatis serovar D (strain ATCC VR-885 / DSM 19411 / UW-3/Cx).